A 1323-amino-acid polypeptide reads, in one-letter code: Glutamate receptor ionotropic, NMDA 2D (1323 aa).

An N-terminal signal peptide occupies residues 1 to 27; sequence MRGAGGPRGPRGPAKMLLLLALACASP. The Extracellular segment spans residues 28-579; sequence FPEEVPGPGA…SPSAFLEPYS (552 aa). A glycan (N-linked (GlcNAc...) asparagine) is linked at N89. C101 and C345 are joined by a disulfide. 4 N-linked (GlcNAc...) asparagine glycosylation sites follow: N349, N363, N381, and N464. 2 disulfides stabilise this stretch: C452–C480 and C459–C481. The L-glutamate site is built by S536, T538, and R543. The N-linked (GlcNAc...) asparagine glycan is linked to N566. A helical membrane pass occupies residues 580-601; that stretch reads PAVWVMMFVMCLTVVAVTVFIF. Over 602–626 the chain is Cytoplasmic; that stretch reads EYLSPVGYNRSLATGKRPGGSTFTI. Residues 627–638 constitute an intramembrane region (discontinuously helical); sequence GKSIWLLWALVF. A pore-forming region spans residues 628-647; sequence KSIWLLWALVFNNSVPVENP. At 639-650 the chain is on the cytoplasmic side; that stretch reads NNSVPVENPRGT. Residues 651-671 traverse the membrane as a helical segment; that stretch reads TSKIMVLVWAFFAVIFLASYT. Residues 672–840 lie on the Extracellular side of the membrane; it reads ANLAAFMIQE…EVMSSKLDID (169 aa). N-linked (GlcNAc...) asparagine glycosylation occurs at N712. 3 residues coordinate L-glutamate: S714, T715, and D756. Residues C770 and C825 are joined by a disulfide bond. Residues 841–864 form a helical membrane-spanning segment; sequence NMAGVFYMLLVAMGLSLLVFAWEH. Residues 865–1323 are Cytoplasmic-facing; sequence LVYWRLRHCL…AHFSSLESEV (459 aa). 3 disordered regions span residues 897-952, 977-1112, and 1201-1323; these read EAAP…PGGA, AAPR…SLGG, and PWAA…ESEV. Positions 899-929 are enriched in pro residues; it reads APPPAKPPPPPQPLPSPAYPAARPPPGPAPF. Over residues 931–940 the composition is skewed to basic and acidic residues; that stretch reads PRERAAADRW. Low complexity predominate over residues 977–986; sequence AAPRGAAGRP. Pro residues predominate over residues 987 to 1001; that stretch reads LSPPTTQPPQKPPPS. The span at 1030-1039 shows a compositional bias: low complexity; the sequence is AAAAAAVGPP. The span at 1080–1092 shows a compositional bias: pro residues; the sequence is TAPPPRRAAPPPC. The segment covering 1208–1228 has biased composition (basic residues); it reads PRRRARCGCPRPHPHRPRASH. R1303 is modified (omega-N-methylarginine). S1313 bears the Phosphoserine mark. The short motif at 1321-1323 is the PDZ-binding element; sequence SEV.

Belongs to the glutamate-gated ion channel (TC 1.A.10.1) family. NR2D/GRIN2D subfamily. Heterotetramer. Forms heterotetrameric channels composed of two GluN1/zeta subunits (GRIN1), and two identical GluN2/epsilon subunits (GRIN2A, GRIN2B, GRIN2C or GRIN2D) or GluN3 subunits (GRIN3A or GRIN3B) (in vitro). In vivo, the subunit composition may depend on the expression levels of the different subunits. Interacts with PDZ domains of PATJ and DLG4. Detected in neonate brain synaptosomes (at protein level).

The protein resides in the cell membrane. It is found in the postsynaptic cell membrane. It catalyses the reaction Ca(2+)(in) = Ca(2+)(out). It carries out the reaction Na(+)(in) = Na(+)(out). The catalysed reaction is K(+)(in) = K(+)(out). In terms of biological role, component of N-methyl-D-aspartate (NMDA) receptors (NMDARs) that function as heterotetrameric, ligand-gated cation channels with high calcium permeability and voltage-dependent block by Mg(2+). Participates in synaptic plasticity for learning and memory formation. Channel activation requires binding of the neurotransmitter L-glutamate to the GluN2 subunit, glycine or D-serine binding to the GluN1 subunit, plus membrane depolarization to eliminate channel inhibition by Mg(2+). NMDARs mediate simultaneously the potasium efflux and the influx of calcium and sodium. Each GluN2 subunit confers differential attributes to channel properties, including activation, deactivation and desensitization kinetics, pH sensitivity, Ca2(+) permeability, and binding to allosteric modulators. The sequence is that of Glutamate receptor ionotropic, NMDA 2D from Mus musculus (Mouse).